The primary structure comprises 83 residues: Small ribosomal subunit protein eS21 (83 aa).

It belongs to the eukaryotic ribosomal protein eS21 family. Component of the 40S small ribosomal subunit.

The protein localises to the cytoplasm. It localises to the cytosol. It is found in the rough endoplasmic reticulum. This is Small ribosomal subunit protein eS21 (RpS21) from Spodoptera frugiperda (Fall armyworm).